A 118-amino-acid polypeptide reads, in one-letter code: Large ribosomal subunit protein bL19 (118 aa).

Belongs to the bacterial ribosomal protein bL19 family.

This protein is located at the 30S-50S ribosomal subunit interface and may play a role in the structure and function of the aminoacyl-tRNA binding site. This Helicobacter pylori (strain P12) protein is Large ribosomal subunit protein bL19.